A 370-amino-acid polypeptide reads, in one-letter code: 4-hydroxy-3-methylbut-2-en-1-yl diphosphate synthase (flavodoxin) (370 aa).

[4Fe-4S] cluster-binding residues include Cys268, Cys271, Cys303, and Glu310.

This sequence belongs to the IspG family. [4Fe-4S] cluster serves as cofactor.

It carries out the reaction (2E)-4-hydroxy-3-methylbut-2-enyl diphosphate + oxidized [flavodoxin] + H2O + 2 H(+) = 2-C-methyl-D-erythritol 2,4-cyclic diphosphate + reduced [flavodoxin]. It participates in isoprenoid biosynthesis; isopentenyl diphosphate biosynthesis via DXP pathway; isopentenyl diphosphate from 1-deoxy-D-xylulose 5-phosphate: step 5/6. In terms of biological role, converts 2C-methyl-D-erythritol 2,4-cyclodiphosphate (ME-2,4cPP) into 1-hydroxy-2-methyl-2-(E)-butenyl 4-diphosphate. This Bacillus anthracis (strain A0248) protein is 4-hydroxy-3-methylbut-2-en-1-yl diphosphate synthase (flavodoxin).